A 338-amino-acid polypeptide reads, in one-letter code: Lipoate-protein ligase A (338 aa).

Positions 29–216 constitute a BPL/LPL catalytic domain; it reads PATQRVLFLW…AFFAHYGERV (188 aa). Residues Arg-71, 76-79, and Lys-134 each bind ATP; that span reads GAVF. A (R)-lipoate-binding site is contributed by Lys-134.

The protein belongs to the LplA family. In terms of assembly, monomer.

The protein localises to the cytoplasm. It catalyses the reaction L-lysyl-[lipoyl-carrier protein] + (R)-lipoate + ATP = N(6)-[(R)-lipoyl]-L-lysyl-[lipoyl-carrier protein] + AMP + diphosphate + H(+). The protein operates within protein modification; protein lipoylation via exogenous pathway; protein N(6)-(lipoyl)lysine from lipoate: step 1/2. It functions in the pathway protein modification; protein lipoylation via exogenous pathway; protein N(6)-(lipoyl)lysine from lipoate: step 2/2. Its function is as follows. Catalyzes both the ATP-dependent activation of exogenously supplied lipoate to lipoyl-AMP and the transfer of the activated lipoyl onto the lipoyl domains of lipoate-dependent enzymes. The sequence is that of Lipoate-protein ligase A from Salmonella paratyphi B (strain ATCC BAA-1250 / SPB7).